A 408-amino-acid chain; its full sequence is Serine-rich antigen (408 aa).

2 repeat units span residues 209–214 and 230–235. Residues 209–235 are 2 X 6 AA repeats of S-V-A-Q-S-E; it reads SVAQSEEHGSDSMSQSYNTCGSVAQSE.

Belongs to the mycobacterial PPE family.

The polypeptide is Serine-rich antigen (sra) (Mycobacterium leprae (strain TN)).